The chain runs to 552 residues: Polypyrimidine tract-binding protein 3 (552 aa).

Position 1 is an N-acetylmethionine (M1). S17 is subject to Phosphoserine. A compositionally biased stretch (polar residues) spans 32-43 (MNSSTPSTANGN). The disordered stretch occupies residues 32 to 55 (MNSSTPSTANGNDSKKFKRDRPPC). 3 consecutive RRM domains span residues 59-143 (RVLH…NLPN), 182-258 (LRII…FSKL), and 358-432 (SVLL…LSKH). K65 is covalently cross-linked (Glycyl lysine isopeptide (Lys-Gly) (interchain with G-Cter in SUMO2)). Residue Y127 is modified to Phosphotyrosine. Position 138 is a phosphothreonine (T138). K216 participates in a covalent cross-link: Glycyl lysine isopeptide (Lys-Gly) (interchain with G-Cter in SUMO2). An N6-acetyllysine modification is found at K423. The disordered stretch occupies residues 435–455 (VQLPREGQEDQGLTKDFSNSP). Residue S454 is modified to Phosphoserine. The RRM 4 domain maps to 475–550 (ATLHLSNIPP…HHLRVSFSKS (76 aa)).

In terms of assembly, interacts with THBS4 (via the acidic amphipathic C-terminus). Expressed in several hematopoietic cell lines examined.

Its function is as follows. RNA-binding protein that mediates pre-mRNA alternative splicing regulation. Plays a role in the regulation of cell proliferation, differentiation and migration. Positive regulator of EPO-dependent erythropoiesis. Participates in cell differentiation regulation by repressing tissue-specific exons. Promotes FAS exon 6 skipping. Binds RNA, preferentially to both poly(G) and poly(U). This chain is Polypyrimidine tract-binding protein 3 (PTBP3), found in Homo sapiens (Human).